The primary structure comprises 54 residues: Lectin alpha-1 chain (54 aa).

It belongs to the leguminous lectin family. Tetramer of two alpha and two beta chains.

The polypeptide is Lectin alpha-1 chain (Lathyrus cicera (Flat-pod pea)).